We begin with the raw amino-acid sequence, 383 residues long: Serpin B5 (383 aa).

Residues Asn-106, Asn-133, Asn-176, and Asn-361 are each glycosylated (N-linked (GlcNAc...) asparagine).

Belongs to the serpin family. Ov-serpin subfamily.

Its subcellular location is the secreted. It localises to the extracellular space. Functionally, may not exhibit serine protease inhibitory activity. In Xenopus laevis (African clawed frog), this protein is Serpin B5 (serpinb5).